Reading from the N-terminus, the 497-residue chain is MKIFNDKQVWFVTGSQHLYGPQVLESVAQNSEEIIAGLNSSDDISVSIANKGTVKTPDEILAVCRAANNDPDCIGLMLWMHTFSPAKMWIAGLTQLNKPFLHLHTQFNAALPWDEIDMDFMNLNQSAHGCREFGFIGTRLNIERKVVVGHWQEPQVHRDIDDWCRAAIGVNAGQHLKVARFGDNMRQVAVTEGNKVSAQIQFGYEVNAYGLGELSDVVNSISDADVNHQLDKYACMYEMSPDLFNDSDLKKLMAQEARLELGMESFLKSVGAGAFTNTFENLTGLTNLPGLATQRLMAKGFGYGGEGDWKTAAMTHIMKVMGQGKPGGTSFMEDYTYNFGEKGQVLGAHMLEVCPTIAAAKPRLEVHRHTIGCRCDIPRLIFSGQSGEALNVSIIDLGDRFRMIVNVIDTVTPPQSLPHLPVAHALWEPQPNLNIAAAAWIHAGGAHHAVYSQAVTLPMLADYAEILGIEMVVIDNSTNLRQFKQELRNNGVYYRLG.

Residues glutamate 306, glutamate 333, histidine 349, and histidine 448 each coordinate Mn(2+).

It belongs to the arabinose isomerase family. Requires Mn(2+) as cofactor.

It carries out the reaction beta-L-arabinopyranose = L-ribulose. It functions in the pathway carbohydrate degradation; L-arabinose degradation via L-ribulose; D-xylulose 5-phosphate from L-arabinose (bacterial route): step 1/3. Its function is as follows. Catalyzes the conversion of L-arabinose to L-ribulose. This is L-arabinose isomerase from Vibrio parahaemolyticus serotype O3:K6 (strain RIMD 2210633).